We begin with the raw amino-acid sequence, 106 residues long: MLNRIIYDPFNDGLDTEQHFEKIHIKTKQRTKTKSITIIENIPEKIDLKLFLKKLKYTFHCSGSIQQNYDDDSKFIQLSGDHRELVKNFLIKNSIVKESNIVMHGY.

It belongs to the SUI1 family.

Additional factor that functions in concert with eIF-2 and the initiator tRNA in directing the ribosome to the proper start site of translation. The sequence is that of Protein translation factor SUI1 homolog from Acanthamoeba polyphaga mimivirus (APMV).